The sequence spans 243 residues: Ribosomal RNA small subunit methyltransferase G (243 aa).

S-adenosyl-L-methionine-binding positions include Gly79, Phe84, 130–131 (AE), and Arg150. A disordered region spans residues 222 to 243 (KPTPNKYPRKPGIPNKQPLGGA).

Belongs to the methyltransferase superfamily. RNA methyltransferase RsmG family.

The protein localises to the cytoplasm. Its function is as follows. Specifically methylates the N7 position of a guanine in 16S rRNA. The chain is Ribosomal RNA small subunit methyltransferase G from Lacticaseibacillus paracasei (strain ATCC 334 / BCRC 17002 / CCUG 31169 / CIP 107868 / KCTC 3260 / NRRL B-441) (Lactobacillus paracasei).